We begin with the raw amino-acid sequence, 310 residues long: Ribosomal RNA small subunit methyltransferase H (310 aa).

S-adenosyl-L-methionine contacts are provided by residues 32 to 34 (GGH), D52, F79, D100, and Q107.

The protein belongs to the methyltransferase superfamily. RsmH family.

Its subcellular location is the cytoplasm. The catalysed reaction is cytidine(1402) in 16S rRNA + S-adenosyl-L-methionine = N(4)-methylcytidine(1402) in 16S rRNA + S-adenosyl-L-homocysteine + H(+). Specifically methylates the N4 position of cytidine in position 1402 (C1402) of 16S rRNA. The protein is Ribosomal RNA small subunit methyltransferase H of Bacillus mycoides (strain KBAB4) (Bacillus weihenstephanensis).